The chain runs to 230 residues: MQLTLTLSRASGMQLFLLVSSLLLWEKVASKPTAIVSTDDLYHCLVEQSHNTFIMAADVYREFDINFAKRSWMKDRILPLCHTASIHTPENLEEVHEMKTEDFLNSIINVSVSWKEPLKHLVVCSDCSSGASVSMGKKAVDMKDKNLIILEGLQTLYNRTQAKVEENFENFDYPAWSGLKDLDSSDEEHHLFAICNLCRCVKRDIHKIDTYLKVLRCRVVFKNECGVSTF.

Residues 1 to 29 form the signal peptide; it reads MQLTLTLSRASGMQLFLLVSSLLLWEKVA. 2 cysteine pairs are disulfide-bonded: Cys-81-Cys-200 and Cys-217-Cys-225. 2 N-linked (GlcNAc...) asparagine glycosylation sites follow: Asn-109 and Asn-158.

Belongs to the somatotropin/prolactin family.

It is found in the secreted. This Rattus norvegicus (Rat) protein is Prolactin-3D1 (Prl3d1).